The chain runs to 476 residues: Glutamate mutase epsilon subunit (476 aa).

Arg62 contributes to the L-glutamate binding site. Gly64 provides a ligand contact to adenosylcob(III)alamin. Position 96 (Arg96) interacts with L-glutamate. Residue Asn119 coordinates adenosylcob(III)alamin. L-glutamate is bound by residues Arg145–His146, Glu167, and Tyr173. Pro176 lines the adenosylcob(III)alamin pocket. Tyr177 is a binding site for L-glutamate. Positions 289, 318, and 322 each coordinate adenosylcob(III)alamin.

This sequence belongs to the methylaspartate mutase GlmE subunit family. In terms of assembly, heterotetramer composed of 2 epsilon subunits (GlmE) and 2 sigma subunits (GlmS). GlmE exists as a homodimer and GlmS as a monomer. Requires adenosylcob(III)alamin as cofactor.

It catalyses the reaction (2S,3S)-3-methyl-L-aspartate = L-glutamate. It participates in amino-acid degradation; L-glutamate degradation via mesaconate pathway; acetate and pyruvate from L-glutamate: step 1/4. Functionally, catalyzes the carbon skeleton rearrangement of L-glutamate to L-threo-3-methylaspartate ((2S,3S)-3-methylaspartate). In Halobacterium salinarum (strain ATCC 700922 / JCM 11081 / NRC-1) (Halobacterium halobium), this protein is Glutamate mutase epsilon subunit.